A 621-amino-acid polypeptide reads, in one-letter code: Interleukin-1 receptor-associated kinase-like 2 (621 aa).

The region spanning 13 to 94 is the Death domain; that stretch reads LDDLCRNMDT…RAAQIILNWK (82 aa). The interval 113–175 is disordered; it reads GKPLAASVRN…TASADSKDFS (63 aa). Residues 157-169 show a composition bias toward polar residues; that stretch reads ASSSLKTNQTASA. Residues 206-476 form the Protein kinase domain; that stretch reads FNPSHKISEG…AEALVMAACL (271 aa). Residues 212–220, Lys233, and 333–336 contribute to the ATP site; these read ISEGTFADV and KSSN. A compositionally biased stretch (polar residues) spans 503–522; it reads ETSLPCSGLSEGTGSSFNTP. The interval 503-534 is disordered; it reads ETSLPCSGLSEGTGSSFNTPEETDDVDNSSFD.

The protein belongs to the protein kinase superfamily. TKL Ser/Thr protein kinase family. Pelle subfamily. In terms of assembly, interacts with MYD88. IL-1 stimulation leads to the formation of a signaling complex which dissociates from the IL-1 receptor following the binding of PELI1.

Functionally, binds to the IL-1 type I receptor following IL-1 engagement, triggering intracellular signaling cascades leading to transcriptional up-regulation and mRNA stabilization. In Bos taurus (Bovine), this protein is Interleukin-1 receptor-associated kinase-like 2 (IRAK2).